Reading from the N-terminus, the 300-residue chain is GTPase Era (300 aa).

Positions 5 to 176 (HSGFVCLVGR…IDVLAAALPA (172 aa)) constitute an Era-type G domain. The G1 stretch occupies residues 13–20 (GRPNTGKS). Position 13 to 20 (13 to 20 (GRPNTGKS)) interacts with GTP. Positions 39–43 (QTTRH) are G2. Residues 60 to 63 (DTPG) are G3. GTP is bound by residues 60–64 (DTPGL) and 125–128 (TKID). The tract at residues 125 to 128 (TKID) is G4. A G5 region spans residues 155–157 (VSA). In terms of domain architecture, KH type-2 spans 207 to 286 (VRDELPHSLA…YLDLRVKVAK (80 aa)).

This sequence belongs to the TRAFAC class TrmE-Era-EngA-EngB-Septin-like GTPase superfamily. Era GTPase family. Monomer.

It localises to the cell envelope. The protein localises to the secreted. It is found in the cell wall. In terms of biological role, exhibits GTPase activity. Binds RNA but is probably not involved in ribosome assembly in mycobacteria. The protein is GTPase Era of Mycobacterium bovis (strain ATCC BAA-935 / AF2122/97).